Consider the following 97-residue polypeptide: NADH-ubiquinone oxidoreductase chain 4L (97 aa).

3 helical membrane passes run 1–21, 25–45, and 60–80; these read MALL…ILLN, FLSI…GIAI, and LFVL…MVGL.

The protein belongs to the complex I subunit 4L family.

Its subcellular location is the mitochondrion membrane. It catalyses the reaction a ubiquinone + NADH + 5 H(+)(in) = a ubiquinol + NAD(+) + 4 H(+)(out). Core subunit of the mitochondrial membrane respiratory chain NADH dehydrogenase (Complex I) that is believed to belong to the minimal assembly required for catalysis. Complex I functions in the transfer of electrons from NADH to the respiratory chain. The immediate electron acceptor for the enzyme is believed to be ubiquinone. The chain is NADH-ubiquinone oxidoreductase chain 4L (ND4L) from Strongylocentrotus purpuratus (Purple sea urchin).